The chain runs to 393 residues: Sedoheptulose-1,7-bisphosphatase, chloroplastic (393 aa).

Cysteines 115 and 120 form a disulfide. Mg(2+)-binding residues include Asp-126, Glu-155, Asp-176, Leu-178, and Asp-179. Substrate contacts are provided by residues 179-182 (DGSS), Tyr-290, and Lys-320. Residue Glu-326 coordinates Mg(2+).

The protein belongs to the FBPase class 1 family. In terms of assembly, homodimer. Requires Mg(2+) as cofactor.

The protein resides in the plastid. The protein localises to the chloroplast. The catalysed reaction is D-sedoheptulose 1,7-bisphosphate + H2O = D-sedoheptulose 7-phosphate + phosphate. The protein operates within carbohydrate biosynthesis; Calvin cycle. This Triticum aestivum (Wheat) protein is Sedoheptulose-1,7-bisphosphatase, chloroplastic.